A 274-amino-acid chain; its full sequence is Large ribosomal subunit protein uL2 (274 aa).

Disordered stretches follow at residues 34–53 (IAPI…TMRY) and 216–274 (RRPR…RRKK).

It belongs to the universal ribosomal protein uL2 family. Part of the 50S ribosomal subunit. Forms a bridge to the 30S subunit in the 70S ribosome.

Functionally, one of the primary rRNA binding proteins. Required for association of the 30S and 50S subunits to form the 70S ribosome, for tRNA binding and peptide bond formation. It has been suggested to have peptidyltransferase activity; this is somewhat controversial. Makes several contacts with the 16S rRNA in the 70S ribosome. The chain is Large ribosomal subunit protein uL2 from Flavobacterium psychrophilum (strain ATCC 49511 / DSM 21280 / CIP 103535 / JIP02/86).